We begin with the raw amino-acid sequence, 783 residues long: uncharacterized protein (783 aa).

Positions C40 to C66 form a DNA-binding region, zn(2)-C6 fungal-type.

It is found in the cytoplasm. The protein localises to the nucleus. This is an uncharacterized protein from Schizosaccharomyces pombe (strain 972 / ATCC 24843) (Fission yeast).